Consider the following 492-residue polypeptide: N-succinylglutamate 5-semialdehyde dehydrogenase (492 aa).

An NAD(+)-binding site is contributed by 220 to 225; the sequence is GSANTG. Active-site residues include Glu243 and Cys277.

Belongs to the aldehyde dehydrogenase family. AstD subfamily.

It carries out the reaction N-succinyl-L-glutamate 5-semialdehyde + NAD(+) + H2O = N-succinyl-L-glutamate + NADH + 2 H(+). It functions in the pathway amino-acid degradation; L-arginine degradation via AST pathway; L-glutamate and succinate from L-arginine: step 4/5. Its function is as follows. Catalyzes the NAD-dependent reduction of succinylglutamate semialdehyde into succinylglutamate. This Escherichia coli O9:H4 (strain HS) protein is N-succinylglutamate 5-semialdehyde dehydrogenase.